Consider the following 267-residue polypeptide: Small ribosomal subunit protein uS10m (267 aa).

A mitochondrion-targeting transit peptide spans 1-10; that stretch reads MLSRILGVRN.

It belongs to the universal ribosomal protein uS10 family. In terms of assembly, part of the mitochondrial small ribosomal subunit.

It is found in the mitochondrion. In terms of biological role, involved in mitochondrial genome encoded proteins translation. Involved in the binding of tRNA to the ribosomes. The sequence is that of Small ribosomal subunit protein uS10m (RSM10) from Debaryomyces hansenii (strain ATCC 36239 / CBS 767 / BCRC 21394 / JCM 1990 / NBRC 0083 / IGC 2968) (Yeast).